A 177-amino-acid polypeptide reads, in one-letter code: Protein GrpE (177 aa).

The protein belongs to the GrpE family. Homodimer.

The protein localises to the cytoplasm. In terms of biological role, participates actively in the response to hyperosmotic and heat shock by preventing the aggregation of stress-denatured proteins, in association with DnaK and GrpE. It is the nucleotide exchange factor for DnaK and may function as a thermosensor. Unfolded proteins bind initially to DnaJ; upon interaction with the DnaJ-bound protein, DnaK hydrolyzes its bound ATP, resulting in the formation of a stable complex. GrpE releases ADP from DnaK; ATP binding to DnaK triggers the release of the substrate protein, thus completing the reaction cycle. Several rounds of ATP-dependent interactions between DnaJ, DnaK and GrpE are required for fully efficient folding. This is Protein GrpE from Thermus thermophilus (strain ATCC BAA-163 / DSM 7039 / HB27).